Consider the following 97-residue polypeptide: Aspartyl/glutamyl-tRNA(Asn/Gln) amidotransferase subunit C (97 aa).

It belongs to the GatC family. Heterotrimer of A, B and C subunits.

It carries out the reaction L-glutamyl-tRNA(Gln) + L-glutamine + ATP + H2O = L-glutaminyl-tRNA(Gln) + L-glutamate + ADP + phosphate + H(+). It catalyses the reaction L-aspartyl-tRNA(Asn) + L-glutamine + ATP + H2O = L-asparaginyl-tRNA(Asn) + L-glutamate + ADP + phosphate + 2 H(+). Its function is as follows. Allows the formation of correctly charged Asn-tRNA(Asn) or Gln-tRNA(Gln) through the transamidation of misacylated Asp-tRNA(Asn) or Glu-tRNA(Gln) in organisms which lack either or both of asparaginyl-tRNA or glutaminyl-tRNA synthetases. The reaction takes place in the presence of glutamine and ATP through an activated phospho-Asp-tRNA(Asn) or phospho-Glu-tRNA(Gln). This is Aspartyl/glutamyl-tRNA(Asn/Gln) amidotransferase subunit C from Prochlorococcus marinus (strain MIT 9303).